The primary structure comprises 123 residues: Holo-[acyl-carrier-protein] synthase (123 aa).

Mg(2+) contacts are provided by D8 and E60.

It belongs to the P-Pant transferase superfamily. AcpS family. Mg(2+) serves as cofactor.

It localises to the cytoplasm. It catalyses the reaction apo-[ACP] + CoA = holo-[ACP] + adenosine 3',5'-bisphosphate + H(+). In terms of biological role, transfers the 4'-phosphopantetheine moiety from coenzyme A to a Ser of acyl-carrier-protein. This Ehrlichia ruminantium (strain Welgevonden) protein is Holo-[acyl-carrier-protein] synthase.